A 211-amino-acid chain; its full sequence is MNNIYTTSISLKRKTGDFIIKKEQLSTKDIKEMVMVIREIFKMRGLERVTRELKGFIHNFPSGSYIKFTLKVDHDFSVISSGGGLLGYISDSVYDAYDTFVFSNVDSYLPGKPLKSIDELRFKWTNIQQIVPLLEYQADPSILSKSRDYSTHIDYSCNNHVHPIKVNFSPKQISTQHSLHQQIEKDNLKLSSSPKLKSKEGIVGSPTARAF.

This is an uncharacterized protein from Dictyostelium discoideum (Social amoeba).